The following is a 130-amino-acid chain: Small ribosomal subunit protein uS8 (130 aa).

This sequence belongs to the universal ribosomal protein uS8 family. Part of the 30S ribosomal subunit.

Its function is as follows. One of the primary rRNA binding proteins, it binds directly to 16S rRNA central domain where it helps coordinate assembly of the platform of the 30S subunit. The chain is Small ribosomal subunit protein uS8 from Methanococcus maripaludis (strain C7 / ATCC BAA-1331).